A 65-amino-acid chain; its full sequence is Prokaryotic ubiquitin-like protein UBact (65 aa).

Residues 1–17 (MEVNMPTTEQGQKNKQM) are compositionally biased toward polar residues. The tract at residues 1–65 (MEVNMPTTEQ…ARRYRQRTGE (65 aa)) is disordered. Positions 35-65 (KVEKPNTEEILKRMRKVDPDQARRYRQRTGE) are enriched in basic and acidic residues. Glutamate 65 is covalently cross-linked (Isoglutamyl lysine isopeptide (Glu-Lys) (interchain with K-? in acceptor proteins)).

It belongs to the ubiquitin-like protein UBact family.

Functionally, may function as a protein modifier covalently attached to lysine residues of substrate proteins. This may serve to target the modified proteins for degradation by proteasomes. The sequence is that of Prokaryotic ubiquitin-like protein UBact from Methylacidiphilum infernorum (isolate V4) (Methylokorus infernorum (strain V4)).